The sequence spans 548 residues: Undecaprenyl phosphate-alpha-4-amino-4-deoxy-L-arabinose arabinosyl transferase 1 (548 aa).

12 helical membrane passes run 11–31 (WLLFFLFILLTYFIPLETRLL), 89–109 (IVVVTSTLLTGWLIYKAAMVV), 114–134 (ALAFNAMTVFLSSFLVLAIGT), 137–157 (ILDPIVTLFVTAAMYSFLVAL), 180–200 (FLTKGFIAVVLPALVFLVMAI), 214–234 (IALLALAITAGPWVITVALQA), 263–283 (FYIPIVILGVLPWLGFLFGAL), 292–312 (GTLYFLLWFTLFFAFFSASKG), 314–334 (LLTYMLPCFVPLSILIAHYIE), 347–367 (VNASINIAFGLMGISAVIYSL), 382–402 (KIVLAISGFLFWSVIGAGALF), and 405–425 (TQFLTMFCSIGLSLVIGYAIP).

This sequence belongs to the glycosyltransferase 83 family.

The protein localises to the cell inner membrane. The enzyme catalyses 4-amino-4-deoxy-alpha-L-arabinopyranosyl di-trans,octa-cis-undecaprenyl phosphate + lipid IVA = lipid IIA + di-trans,octa-cis-undecaprenyl phosphate.. It participates in lipopolysaccharide metabolism; 4-amino-4-deoxy-beta-L-arabinose-lipid A biosynthesis. Functionally, catalyzes the transfer of the L-Ara4N moiety of the glycolipid undecaprenyl phosphate-alpha-L-Ara4N to lipid A. The modified arabinose is attached to lipid A and is required for resistance to polymyxin and cationic antimicrobial peptides. This Proteus mirabilis (strain HI4320) protein is Undecaprenyl phosphate-alpha-4-amino-4-deoxy-L-arabinose arabinosyl transferase 1.